A 569-amino-acid chain; its full sequence is Linoleate hydratase (569 aa).

FAD is bound at residue Tyr87. Tyr205 serves as the catalytic Proton donor. Residues Val254, Ser300, and Thr524 each contribute to the FAD site.

Belongs to the oleate hydratase family. Requires FAD as cofactor.

It localises to the cell membrane. Its subcellular location is the cytoplasm. The catalysed reaction is (9Z,12Z)-octadecadienoate + H2O = (10S)-hydroxy-(12Z)-octadecenoate. It carries out the reaction (10E,12Z)-octadecadienoate + H2O = (10S)-hydroxy-(12Z)-octadecenoate. It catalyses the reaction (9Z)-octadecenoate + H2O = 10-hydroxyoctadecanoate. The enzyme catalyses (10E)-octadecenoate + H2O = 10-hydroxyoctadecanoate. The catalysed reaction is (9E,11E)-octadecadienoate + H2O = 10-hydroxy-(11E)-octadecenoate. It carries out the reaction (9Z,11E)-octadecadienoate + H2O = 10-hydroxy-(11E)-octadecenoate. It catalyses the reaction (9Z)-hexadecenoate + H2O = 10-hydroxyhexadecanoate. The enzyme catalyses (9Z,12Z,15Z)-octadecatrienoate + H2O = (10S)-hydroxy-(12Z,15Z)-octadecadienoate. The catalysed reaction is (6Z,9Z,12Z)-octadecatrienoate + H2O = (10S)-hydroxy-(6Z,12Z)-octadecadienoate. It carries out the reaction (6Z,9Z,12Z,15Z)-octadecatetraenoate + H2O = (10S)-hydroxy-(6Z,12Z,15Z)-octadecatrienoate. It functions in the pathway lipid metabolism; fatty acid metabolism. Its activity is regulated as follows. The addition of NADH or NADPH highly increases catalytic activity, likely by reducing the cofactor FAD to FADH2. The hydration and dehydration reactions are strongly inhibited by Ag(+), Fe(2+), Cu(2+), Zn(2+), Hg(2+), and Fe(3+). Its function is as follows. Is involved in a saturation metabolic pathway of polyunsaturated fatty acids, that detoxifies unsaturated fatty acids and generates hydroxy fatty acids, oxo fatty acids, conjugated fatty acids such as conjugated linoleic acids (CLAs), and partially saturated trans-fatty acids as intermediates. CLA-HY catalyzes the hydration and dehydration steps in the production of 10-hydroxy-cis-12-octadecenoate, trans-10,cis-12-CLA, cis-9,trans-11-CLA, trans-9,trans-11-CLA, oleate and trans-10-octadecenoate during linoleate metabolism. Is also able to hydrate palmitoleic acid (cis-9-hexadecenoic acid), oleic acid, alpha-linolenic acid, gamma-linolenic acid, and stearidonic acid into the corresponding 10-hydroxy fatty acids, and dehydrate 10-hydroxy-cis-12,cis-15-octadecadienoic acid, 10-hydroxy-cis-6,cis-12-octadecadienoic acid, and 10-hydroxyoctadecanoic acid into the corresponding fatty acids with cis double bonds at the Delta9 position. As part of the gut microbiome, this enzyme modifies host fatty acid composition and is expected to improve human health by altering lipid metabolism related to the onset of metabolic syndrome. Shows regioselectivity for Delta9 double bond hydration, generating C10 hydroxy groups in the (S)-configuration with high enantioselectivity, when another double bond is in position 12. Is not able to hydrate fatty acids with a trans carbon-carbon double bond at Delta9 position (elaidic acid, trans-9-octadecenoic acid), fatty acid esters (methyl linoleate, monolinolein, dilinolein, and trilinolein), and conjugated fatty acids (conjugated linoleic acids), as well as fatty acids with other chain lengths, such as myristoleic acid (cis-9-tetradecenoic acid), arachidonic acid (cis-5,cis-8,cis-11,cis-14-eicosatetraenoic acid), EPA (cis-5,cis-8,cis-11,cis-14,cis-17-eicosapentaenoic acid), DHA (cis-4,cis-7,cis-10,cis-13,cis-16,cis-19-docosahexaenoic acid) and fatty acids with a cis carbon-carbon double bond at Delta11 position, such as cis-vaccenic acid and cis-11-octadecenoic acid, or fatty alcohols, such as linoleyl alcohol. Is not able to dehydrate 12-hydroxy, 3-hydroxy, and 9-hydroxy fatty acids. This Lactiplantibacillus plantarum (Lactobacillus plantarum) protein is Linoleate hydratase.